Here is a 302-residue protein sequence, read N- to C-terminus: 4-hydroxy-tetrahydrodipicolinate synthase (302 aa).

Residue threonine 55 coordinates pyruvate. Catalysis depends on tyrosine 144, which acts as the Proton donor/acceptor. The Schiff-base intermediate with substrate role is filled by lysine 172. Valine 214 contributes to the pyruvate binding site.

This sequence belongs to the DapA family. Homotetramer; dimer of dimers.

Its subcellular location is the cytoplasm. The catalysed reaction is L-aspartate 4-semialdehyde + pyruvate = (2S,4S)-4-hydroxy-2,3,4,5-tetrahydrodipicolinate + H2O + H(+). Its pathway is amino-acid biosynthesis; L-lysine biosynthesis via DAP pathway; (S)-tetrahydrodipicolinate from L-aspartate: step 3/4. Catalyzes the condensation of (S)-aspartate-beta-semialdehyde [(S)-ASA] and pyruvate to 4-hydroxy-tetrahydrodipicolinate (HTPA). The protein is 4-hydroxy-tetrahydrodipicolinate synthase of Prochlorococcus marinus (strain MIT 9211).